The following is a 214-amino-acid chain: Lazarillo protein (214 aa).

A signal peptide spans 1-21 (MIRRGLLSVTAALVLLSVSCS). N-linked (GlcNAc...) asparagine glycosylation is found at Asn-38, Asn-74, Asn-84, Asn-90, Asn-130, Asn-158, and Asn-161. The GPI-anchor amidated alanine moiety is linked to residue Ala-192. A propeptide spans 193 to 214 (GAEHVVGAMLSVAIASLFALLH) (removed in mature form).

It belongs to the calycin superfamily. Lipocalin family. N-glycosylated. Post-translationally, contains disulfide bonds. As to expression, expressed by a subset of neuroblasts, ganglion mother cells and neurons of the CNS; by all sensory neurons of the PNS.

Its subcellular location is the cell membrane. Functionally, putative role in axonal outgrowth and guidance, required for the navigation of identified commissural neurons. Could be a receptor the midline morphogen. The chain is Lazarillo protein from Schistocerca americana (American grasshopper).